The following is a 434-amino-acid chain: MRKFLLSEGEIPKKWLNILPLLPEPLEPPLDPETMEPVKPEKLLAIFPEPLVEQEVSDKEWIDIPEEVLDIYSLWRPTPLHRAKNLEEFLGTPAKIFYKNESVSPPGSHKPNTAVAQAYYNKISGVKRLTTETGAGQWGSALSFATQFFDLQCRVYMVRVSYNQKPYRRILMETWKGEVIPSPSPYTNAGRKYYEENPEHPGSLGIAISEAIEEAASREDTKYSLGSVLNHVLLHQTVIGLEAKKQMEEAGYYPDVIIGAVGGGSNFAGLSFPFLADVLRGDKRKEDLKVLAVEPEACPTLTKGEYKYDFGDSVGLTPLIKMYTLGHDFVPSPIHAGGLRYHGDAPLVCKLYNLGYIDAVAYKQTEVFEAAVTFARTEGIVPAPESAHAIKAAIDEALKCKETGEEKVILFNLSGHGYFDLSAYDKYLHGELTD.

Residue Lys110 is modified to N6-(pyridoxal phosphate)lysine.

This sequence belongs to the TrpB family. Tetramer of two alpha and two beta chains. Pyridoxal 5'-phosphate is required as a cofactor.

The catalysed reaction is (1S,2R)-1-C-(indol-3-yl)glycerol 3-phosphate + L-serine = D-glyceraldehyde 3-phosphate + L-tryptophan + H2O. It participates in amino-acid biosynthesis; L-tryptophan biosynthesis; L-tryptophan from chorismate: step 5/5. Functionally, the beta subunit is responsible for the synthesis of L-tryptophan from indole and L-serine. The chain is Tryptophan synthase beta chain 2 (trpB2) from Aquifex aeolicus (strain VF5).